A 280-amino-acid chain; its full sequence is Succinate dehydrogenase [ubiquinone] iron-sulfur subunit, mitochondrial (280 aa).

A mitochondrion-targeting transit peptide spans 1 to 25 (MAAVCFSLSRCCSAVHRPAVTAVRF). Positions 39-129 (KKFQIYRWDP…TSKVTKIYPL (91 aa)) constitute a 2Fe-2S ferredoxin-type domain. 4 residues coordinate [2Fe-2S] cluster: Cys92, Cys97, Cys100, and Cys112. A 4Fe-4S ferredoxin-type domain is found at 175–205 (DRQKLDGLYECILCACCSTSCPSYWWNADKY). 3 residues coordinate [4Fe-4S] cluster: Cys185, Cys188, and Cys191. Cys195 provides a ligand contact to [3Fe-4S] cluster. Trp200 is an a ubiquinone binding site. [3Fe-4S] cluster is bound by residues Cys242 and Cys248. Cys252 provides a ligand contact to [4Fe-4S] cluster.

This sequence belongs to the succinate dehydrogenase/fumarate reductase iron-sulfur protein family. In terms of assembly, component of complex II composed of four subunits: the flavoprotein (FP) sdha, iron-sulfur protein (IP) sdhb, and a cytochrome b composed of sdhc and sdhd. [2Fe-2S] cluster serves as cofactor. [3Fe-4S] cluster is required as a cofactor. It depends on [4Fe-4S] cluster as a cofactor.

The protein resides in the mitochondrion inner membrane. It catalyses the reaction a quinone + succinate = fumarate + a quinol. The enzyme catalyses (R)-malate + a quinone = enol-oxaloacetate + a quinol. The catalysed reaction is (S)-malate + a quinone = enol-oxaloacetate + a quinol. It participates in carbohydrate metabolism; tricarboxylic acid cycle; fumarate from succinate (eukaryal route): step 1/1. Its activity is regulated as follows. Enol-oxaloacetate inhibits the succinate dehydrogenase activity. In terms of biological role, iron-sulfur protein (IP) subunit of the succinate dehydrogenase complex (mitochondrial respiratory chain complex II), responsible for transferring electrons from succinate to ubiquinone (coenzyme Q). SDH also oxidizes malate to the non-canonical enol form of oxaloacetate, enol-oxaloacetate. Enol-oxaloacetate, which is a potent inhibitor of the succinate dehydrogenase activity, is further isomerized into keto-oxaloacetate. The sequence is that of Succinate dehydrogenase [ubiquinone] iron-sulfur subunit, mitochondrial (sdhb) from Danio rerio (Zebrafish).